Reading from the N-terminus, the 554-residue chain is MNIYIFSKEKKRKKVVCDNLSKTRGSRREHCEPHRRRMGQSTSKFRRSKTTFTSPVLPNLREQNSGADEPYDYISNLPDECLSLIFQSLTCADLKRCSLVCRRWLTIEGQCRHRLSLKAQSDLISVIPSLFTRFDSVTKLVLRSDRRSLGICDNAFVMISVRCRNLTRLKLRGCPEISDLGIIGFTENCRSLKKVSFGSCGFGVKGMNALLNTCLGLEELSVKRLRGIGAGAELIGPGGAAGSLKVICLKELHNGQCFAPLLSGAKGLRILKIFRCSGDWDRVFEAVRDKVNAIVEIHLERIQMSDLGLTALSKCSGVEVLHLVKTPDCTNVGLALVAERCKLLRKLHIDGWKTNRIGDEGLIVVAKYCWNLQELVLIGVNPTKLSLEAIVSNCLNLERLALCGSDTVGDTELCCIAEKCLALRKLCIKNCPITDDGIKALGNGCPNLLKVKVKKCRGVTTQGADLLRKRRALLVVNLDAPETPIVEGSVGEGGAQENAVEFPPSRLQIPTIGLASGSTSRSSSFKLRLGFLSQRNFVSCALRRLGSRSRSRNE.

Positions 71-117 constitute an F-box domain; sequence YDYISNLPDECLSLIFQSLTCADLKRCSLVCRRWLTIEGQCRHRLSL. 12 LRR repeats span residues 119 to 144, 148 to 173, 174 to 199, 205 to 224, 250 to 275, 301 to 325, 326 to 351, 354 to 379, 383 to 404, 405 to 428, 430 to 455, and 456 to 480; these read AQSD…VLRS, SLGI…KLRG, CPEI…SFGS, KGMN…SVKR, KELH…KIFR, RIQM…HLVK, TPDC…HIDG, TNRI…VLIG, TKLS…ALCG, SDTV…KLCI, NCPI…KVKK, and CRGV…NLDA.

This is Putative F-box/LRR-repeat protein 8 (FBL8) from Arabidopsis thaliana (Mouse-ear cress).